Reading from the N-terminus, the 234-residue chain is Leucyl/phenylalanyl-tRNA--protein transferase (234 aa).

The protein belongs to the L/F-transferase family.

Its subcellular location is the cytoplasm. It catalyses the reaction N-terminal L-lysyl-[protein] + L-leucyl-tRNA(Leu) = N-terminal L-leucyl-L-lysyl-[protein] + tRNA(Leu) + H(+). The enzyme catalyses N-terminal L-arginyl-[protein] + L-leucyl-tRNA(Leu) = N-terminal L-leucyl-L-arginyl-[protein] + tRNA(Leu) + H(+). It carries out the reaction L-phenylalanyl-tRNA(Phe) + an N-terminal L-alpha-aminoacyl-[protein] = an N-terminal L-phenylalanyl-L-alpha-aminoacyl-[protein] + tRNA(Phe). In terms of biological role, functions in the N-end rule pathway of protein degradation where it conjugates Leu, Phe and, less efficiently, Met from aminoacyl-tRNAs to the N-termini of proteins containing an N-terminal arginine or lysine. The protein is Leucyl/phenylalanyl-tRNA--protein transferase of Nitratidesulfovibrio vulgaris (strain ATCC 29579 / DSM 644 / CCUG 34227 / NCIMB 8303 / VKM B-1760 / Hildenborough) (Desulfovibrio vulgaris).